A 208-amino-acid polypeptide reads, in one-letter code: Ypt/Rab-type GTPase YPT7 (208 aa).

GTP-binding positions include Ser-17–Ser-23, Tyr-33–Thr-40, Gly-67, and Asn-126–Asp-129. The Effector region signature appears at Tyr-37–Phe-45. Lys-147 participates in a covalent cross-link: Glycyl lysine isopeptide (Lys-Gly) (interchain with G-Cter in ubiquitin). Ser-158–Lys-160 provides a ligand contact to GTP. 2 S-geranylgeranyl cysteine lipidation sites follow: Cys-206 and Cys-208. Cys-208 is modified (cysteine methyl ester).

This sequence belongs to the small GTPase superfamily. Rab family. As to quaternary structure, interacts with IVY1. Interacts with YIF1, YIP4 and YIP5. Interacts with the HOPS complex. Interacts with the class C-Vps complex. Interacts with VPS35. Interacts with VPS39. Interacts with the GDP dissociation inhibitor GDI1. Interacts with CCZ1.

It is found in the late endosome. It localises to the vacuole membrane. Rab activation is generally mediated by a guanine exchange factor (GEF), while inactivation through hydrolysis of bound GTP is catalyzed by a GTPase activating protein (GAP). YPT7 is activated by GEFs MON1-CCZ1 complex (MC1) and VAM6/VPS39, and inactivated by GAPs GYP7 and GYP1. Functionally, ypt/Rab-type GTPases are key regulators of membrane trafficking and intracellular vesicular transport. They act as molecular switches that convert between GTP-bound and GDP-bound states, and regulate virtually all steps of membrane traffic from the formation of the transport vesicle at the donor membrane to its fusion at the target membrane. In the GDP-bound state, Ypt proteins are predominantly cytosolic, solubilized through the interaction with a GDP dissociation inhibitor (GDI). In the GTP-bound state, the proteins are membrane bound and interact with specific effector proteins that select cargo, promote vesicle movement, or verify the correct site of fusion. Involved in regulation of vesicular protein transport in exo- and endocytosis. Involved in regulation of late endosome to vacuole trafficking and homotypic vacuole fusion, by interacting in its GTP-bound state on the donor membrane with the large multiprotein HOPS/class C-Vps tethering complex on the acceptor membrane. Involved in retromer assembly and cargo export, recognizing the cargo selection complex (CSC). GTP-bound YPT7 recruits CSC to vacuolar membranes via retromer subunit VPS35. Interacts with the HOPS complex subunit VPS39 independent of the HOPS complex at mitochondria-vacuole contact sites (vCLAMPs), providing a physical and metabolic interconnection between the endocytic pathway and mitochondria. The protein is Ypt/Rab-type GTPase YPT7 (YPT7) of Saccharomyces cerevisiae (strain ATCC 204508 / S288c) (Baker's yeast).